The primary structure comprises 348 residues: Rhodopsin (348 aa).

Met-1 carries the post-translational modification N-acetylmethionine. Over 1-36 the chain is Extracellular; it reads MNGTEGPNFYVPFSNATGVVRSPFEYPQYYLAEPWQ. Asn-2 and Asn-15 each carry an N-linked (GlcNAc...) asparagine glycan. The helical transmembrane segment at 37–61 threads the bilayer; sequence FSMLAAYMFLLIVLGFPINFLTLYV. Over 62–73 the chain is Cytoplasmic; that stretch reads TVQHKKLRTPLN. The helical transmembrane segment at 74–96 threads the bilayer; it reads YILLNLAVADLFMVFGGFTTTLY. Over 97-110 the chain is Extracellular; that stretch reads TSLHGYFVFGPTGC. The cysteines at positions 110 and 187 are disulfide-linked. A helical membrane pass occupies residues 111-133; it reads NLEGFFATLGGEIALWSLVVLAI. The 'Ionic lock' involved in activated form stabilization motif lies at 134 to 136; the sequence is ERY. At 134 to 152 the chain is on the cytoplasmic side; it reads ERYVVICKPMSNFRFGENH. The helical transmembrane segment at 153-173 threads the bilayer; it reads AIMGVVFTWIMALACAAPPLV. The Extracellular segment spans residues 174–202; the sequence is GWSRYIPEGMQCSCGVDYYTLKPEVNNES. Residue Glu-201 participates in Zn(2+) binding. A helical membrane pass occupies residues 203–224; it reads FVIYMFVVHFTIPLIVIFFCYG. The Cytoplasmic segment spans residues 225-252; the sequence is QLVFTVKEAAAQQQESATTQKAEKEVTR. A helical transmembrane segment spans residues 253 to 274; the sequence is MVILMVVFFLICWFPYAGVAFY. The Extracellular portion of the chain corresponds to 275–286; it reads IFTHQGSNFGPI. Gln-279 contacts Zn(2+). The helical transmembrane segment at 287–308 threads the bilayer; it reads FMTLPAFFAKSSSIYNPVIYIM. Lys-296 is subject to N6-(retinylidene)lysine. Residues 309–348 lie on the Cytoplasmic side of the membrane; the sequence is MNKQFRNCMLTTLCCGKNILGDDEASATASKTETSQVAPA. S-palmitoyl cysteine attachment occurs at residues Cys-322 and Cys-323. Positions 330-348 are interaction with SAG; sequence DDEASATASKTETSQVAPA. The residue at position 334 (Ser-334) is a Phosphoserine. The residue at position 336 (Thr-336) is a Phosphothreonine. At Ser-338 the chain carries Phosphoserine. A phosphothreonine mark is found at Thr-340 and Thr-342. Phosphoserine is present on Ser-343.

It belongs to the G-protein coupled receptor 1 family. Opsin subfamily. In terms of assembly, homodimer. May form a complex composed of RHO, GRK1 and RCVRN in a Ca(2+)-dependent manner; RCVRN prevents the interaction between GRK1 and RHO. Interacts with GRK1. Interacts (phosphorylated form) with SAG. Interacts with GNAT1. Interacts with GNAT3. SAG and G-proteins compete for a common binding site. Interacts with PRCD; the interaction promotes PRCD stability. Forms a complex with ASAP1 and ARF4. Forms a complex with ASAP1, RAB11A, Rabin8/RAB3IP, ARF4 and RAB11FIP3; the complex regulates Golgi-to-cilia rhodopsin/RHO transport in photoreceptors. In terms of processing, phosphorylated on some or all of the serine and threonine residues present in the C-terminal region. Contains one covalently linked retinal chromophore. Upon light absorption, the covalently bound 11-cis-retinal is converted to all-trans-retinal. After hydrolysis of the Schiff base and release of the covalently bound all-trans-retinal, active rhodopsin is regenerated by binding of a fresh molecule of 11-cis-retinal.

It is found in the membrane. Its subcellular location is the cell projection. The protein resides in the cilium. The protein localises to the photoreceptor outer segment. In terms of biological role, photoreceptor required for image-forming vision at low light intensity. Required for photoreceptor cell viability after birth. Light-induced isomerization of 11-cis to all-trans retinal triggers a conformational change that activates signaling via G-proteins. Subsequent receptor phosphorylation mediates displacement of the bound G-protein alpha subunit by the arrestin SAG and terminates signaling. The protein is Rhodopsin (RHO) of Cricetulus griseus (Chinese hamster).